Consider the following 710-residue polypeptide: Ephexin-1 (710 aa).

The span at 1–20 shows a compositional bias: basic and acidic residues; the sequence is METKNSEDWGKPQRKSESSS. Residues 1–146 form a disordered region; sequence METKNSEDWG…TPEECPALTD (146 aa). Positions 1 to 272 are regulatory region; modulates activity toward RHOA, RAC1 and CDC42; the sequence is METKNSEDWG…VLDILQPEEI (272 aa). Over residues 123–137 the composition is skewed to polar residues; it reads QEASESSSTPGNGTT. Position 177 is a phosphotyrosine (Tyr-177). Residues 192-234 are disordered; that stretch reads RRQQDAEIQGNSDGSQVGEDAGEEEEEEEEGEEEELASPPERR. Over residues 211 to 227 the composition is skewed to acidic residues; that stretch reads DAGEEEEEEEEGEEEEL. The region spanning 273-457 is the DH domain; that stretch reads RLQEAMFELV…EMVVKACNEG (185 aa). The region spanning 489–601 is the PH domain; it reads WLLKQGELQQ…WMTSLAPNRR (113 aa). The 62-residue stretch at 612–673 folds into the SH3 domain; it reads LDCPQVQCVH…PSSMTEEILN (62 aa). Over residues 688–699 the composition is skewed to basic and acidic residues; it reads HKMEDPQRSQNK. The interval 688-710 is disordered; the sequence is HKMEDPQRSQNKDRRKLGSRNRQ. Positions 700 to 710 are enriched in basic residues; the sequence is DRRKLGSRNRQ.

In terms of assembly, interacts with CDK5R1 and EPHA4; activated by EPHA4 through the CDK5 kinase. Post-translationally, src-dependent phosphorylation at Tyr-177 upon EPHA4 activation increases the guanine exchange factor activity toward RHOA. Phosphorylation by CDK5 upon EPHA4 activation by EFNA1 may regulate dendritic spine morphogenesis. As to expression, highly expressed in brain and to a lower extent in eye.

It localises to the cytoplasm. The protein resides in the membrane. Its subcellular location is the cell projection. The protein localises to the growth cone. Acts as a guanine nucleotide exchange factor (GEF) which differentially activates the GTPases RHOA, RAC1 and CDC42. Plays a role in axon guidance regulating ephrin-induced growth cone collapse and dendritic spine morphogenesis. Upon activation by ephrin through EPHA4, the GEF activity switches toward RHOA resulting in its activation. Activated RHOA promotes cone retraction at the expense of RAC1- and CDC42-stimulated growth cone extension. The chain is Ephexin-1 (Ngef) from Mus musculus (Mouse).